The primary structure comprises 747 residues: Pseudouridine-metabolizing bifunctional protein C1861.05 (747 aa).

Residues 1–379 (MLIVMNRGCR…KVSDKGVSSS (379 aa)) are pseudouridine-5'-phosphate glycosidase. The active-site Proton donor; for PsiMP glycosidase activity is Glu61. Residues Lys123 and Val143 each coordinate substrate. Position 175 (Asp175) interacts with Mn(2+). 177-179 (SAD) provides a ligand contact to substrate. Catalysis depends on Lys196, which acts as the Nucleophile; for PsiMP glycosidase activity. The pseudouridine kinase stretch occupies residues 380–747 (KKKITETTSK…VNPEIKTLLK (368 aa)).

It in the N-terminal section; belongs to the pseudouridine-5'-phosphate glycosidase family. In the C-terminal section; belongs to the carbohydrate kinase PfkB family. It depends on Mn(2+) as a cofactor.

It localises to the cytoplasm. The enzyme catalyses D-ribose 5-phosphate + uracil = psi-UMP + H2O. The catalysed reaction is pseudouridine + ATP = psi-UMP + ADP + H(+). Its function is as follows. Bifunctional enzyme that catalyzes the phosphorylation of pseudouridine to pseudouridine 5'-phosphate (PsiMP), and the reversible cleavage of pseudouridine 5'-phosphate to ribose 5-phosphate and uracil. Is involved in a pseudouridine degradation pathway. The chain is Pseudouridine-metabolizing bifunctional protein C1861.05 from Schizosaccharomyces pombe (strain 972 / ATCC 24843) (Fission yeast).